The following is a 327-amino-acid chain: GMP reductase (327 aa).

The active-site Thioimidate intermediate is C175. Residue 204–227 participates in NADP(+) binding; sequence IIADGGIRTNGDVAKSIRFGATMV.

This sequence belongs to the IMPDH/GMPR family. GuaC type 2 subfamily.

It catalyses the reaction IMP + NH4(+) + NADP(+) = GMP + NADPH + 2 H(+). Catalyzes the irreversible NADPH-dependent deamination of GMP to IMP. It functions in the conversion of nucleobase, nucleoside and nucleotide derivatives of G to A nucleotides, and in maintaining the intracellular balance of A and G nucleotides. The polypeptide is GMP reductase (Bacillus anthracis).